The primary structure comprises 367 residues: MSANSFGKLFTVTTFGESHGPAIGCVVDGCPPGLEIAPEEFTHDLQRRASGKSRHTSARREADEIEILSGVYEGRTTGTPIGLLIRNTDQRSKDYSNIAQQFRPGHADYTYWQKYGIRDPRGGGRSSARETTMRVAAGVIAKKWLKQRYGVLVRGFLSQLGEIRPAGFDWDAVEDNPFFWPHAAQVPELETYMDALRKSGDSVGARVDVVAGGVPAGWGEPIYGKLDAELAAALMSINAVKGVEIGDGFASAAQRGTEHRDLITPEGFLSNHAGGILGGISTGQAVTASMVLKPTSSLRLPGATVDADGSVVDVITTGRHDPCVGIRATPIAEAMMALVLMDQALRHRAQCGDVGEVSPRIPGQVDV.

The tract at residues 41-60 (FTHDLQRRASGKSRHTSARR) is disordered. NADP(+) is bound by residues Arg48 and Arg54. FMN contacts are provided by residues 125-127 (RSS), 238-239 (NA), Gly278, 293-297 (KPTSS), and Arg319.

It belongs to the chorismate synthase family. Homotetramer. Requires FMNH2 as cofactor.

The catalysed reaction is 5-O-(1-carboxyvinyl)-3-phosphoshikimate = chorismate + phosphate. It participates in metabolic intermediate biosynthesis; chorismate biosynthesis; chorismate from D-erythrose 4-phosphate and phosphoenolpyruvate: step 7/7. In terms of biological role, catalyzes the anti-1,4-elimination of the C-3 phosphate and the C-6 proR hydrogen from 5-enolpyruvylshikimate-3-phosphate (EPSP) to yield chorismate, which is the branch point compound that serves as the starting substrate for the three terminal pathways of aromatic amino acid biosynthesis. This reaction introduces a second double bond into the aromatic ring system. The chain is Chorismate synthase from Xanthomonas axonopodis pv. citri (strain 306).